Here is a 3583-residue protein sequence, read N- to C-terminus: Surfactin synthase subunit 2 (3583 aa).

Carrier domains lie at 965-1039, 2005-2080, and 3034-3108; these read APKT…EENE, APET…EASA, and APTT…ERAE. O-(pantetheine 4'-phosphoryl)serine is present on residues Ser-999, Ser-2040, and Ser-3069.

It belongs to the ATP-dependent AMP-binding enzyme family. Pantetheine 4'-phosphate is required as a cofactor.

Its pathway is antibiotic biosynthesis; surfactin biosynthesis. This protein is a multifunctional enzyme able to activate and polymerize the amino acids Leu, Glu, Asp and Val. Activation sites for these AA consist of individual domains. The sequence is that of Surfactin synthase subunit 2 (srfAB) from Bacillus subtilis (strain 168).